Consider the following 369-residue polypeptide: Mitogen-activated protein kinase 11 (369 aa).

Positions Val40 to Leu326 constitute a Protein kinase domain. ATP is bound by residues Ile46 to Val54 and Lys69. Asp166 functions as the Proton acceptor in the catalytic mechanism. At Thr198 the chain carries Phosphothreonine. The TXY signature appears at Thr198–Tyr200. Position 200 is a phosphotyrosine (Tyr200). Thr203 carries the phosphothreonine modification.

Belongs to the protein kinase superfamily. CMGC Ser/Thr protein kinase family. MAP kinase subfamily. Interacts with MKK1, MKK2 and MKK6. In terms of processing, dually phosphorylated on Thr-198 and Tyr-200, which activates the enzyme.

It carries out the reaction L-seryl-[protein] + ATP = O-phospho-L-seryl-[protein] + ADP + H(+). The catalysed reaction is L-threonyl-[protein] + ATP = O-phospho-L-threonyl-[protein] + ADP + H(+). With respect to regulation, activated by threonine and tyrosine phosphorylation. The polypeptide is Mitogen-activated protein kinase 11 (MPK11) (Arabidopsis thaliana (Mouse-ear cress)).